The following is a 292-amino-acid chain: Small ribosomal subunit biogenesis GTPase RsgA (292 aa).

The region spanning 64–221 (RSELFRPAVA…LVDTPGFSSL (158 aa)) is the CP-type G domain. GTP is bound by residues 113 to 116 (NKMD) and 164 to 172 (GPSGVGKST). Residues cysteine 245, cysteine 250, histidine 252, and cysteine 258 each contribute to the Zn(2+) site.

It belongs to the TRAFAC class YlqF/YawG GTPase family. RsgA subfamily. As to quaternary structure, monomer. Associates with 30S ribosomal subunit, binds 16S rRNA. Requires Zn(2+) as cofactor.

It localises to the cytoplasm. One of several proteins that assist in the late maturation steps of the functional core of the 30S ribosomal subunit. Helps release RbfA from mature subunits. May play a role in the assembly of ribosomal proteins into the subunit. Circularly permuted GTPase that catalyzes slow GTP hydrolysis, GTPase activity is stimulated by the 30S ribosomal subunit. The chain is Small ribosomal subunit biogenesis GTPase RsgA from Clostridium botulinum (strain Kyoto / Type A2).